The chain runs to 229 residues: Cytidylate kinase (229 aa).

12–20 (GPSGSGKGT) contacts ATP.

This sequence belongs to the cytidylate kinase family. Type 1 subfamily.

The protein resides in the cytoplasm. The enzyme catalyses CMP + ATP = CDP + ADP. It catalyses the reaction dCMP + ATP = dCDP + ADP. The chain is Cytidylate kinase from Pseudomonas fluorescens (strain Pf0-1).